A 248-amino-acid chain; its full sequence is Triosephosphate isomerase B (248 aa).

Residues Asn11 and Lys13 each contribute to the substrate site. Catalysis depends on His95, which acts as the Electrophile. Residue Glu165 is the Proton acceptor of the active site.

Belongs to the triosephosphate isomerase family. Homodimer.

The protein localises to the cytoplasm. It catalyses the reaction dihydroxyacetone phosphate = methylglyoxal + phosphate. The enzyme catalyses D-glyceraldehyde 3-phosphate = dihydroxyacetone phosphate. It participates in carbohydrate degradation; glycolysis; D-glyceraldehyde 3-phosphate from glycerone phosphate: step 1/1. Its pathway is carbohydrate biosynthesis; gluconeogenesis. Triosephosphate isomerase is an extremely efficient metabolic enzyme that catalyzes the interconversion between dihydroxyacetone phosphate (DHAP) and D-glyceraldehyde-3-phosphate (G3P) in glycolysis and gluconeogenesis. Its function is as follows. It is also responsible for the non-negligible production of methylglyoxal a reactive cytotoxic side-product that modifies and can alter proteins, DNA and lipids. The chain is Triosephosphate isomerase B (tpi1b) from Danio rerio (Zebrafish).